Consider the following 901-residue polypeptide: Schlafen family member 11 (901 aa).

Glu209 and Glu214 together coordinate Mg(2+). The active site involves Lys216. Residues His285, Cys287, Cys321, and Cys322 each contribute to the Zn(2+) site. 599–606 is a binding site for ATP; that stretch reads GLPGSGKT.

It belongs to the Schlafen family. Subgroup III subfamily. In terms of assembly, homodimer. Interacts with MCM3. Interacts with DHX9. Interacts with RPA1. It depends on Mg(2+) as a cofactor. Exhibits a wider expression range in ovarian and colon adenocarcinoma than in their corresponding healthy tissues.

Its subcellular location is the nucleus. It is found in the chromosome. Its function is as follows. Inhibitor of DNA replication that promotes cell death in response to DNA damage. Acts as a guardian of the genome by killing cells with defective replication. Persistently blocks stressed replication forks by opening chromatin across replication initiation sites at stressed replication forks, possibly leading to unwind DNA ahead of the MCM helicase and block fork progression, ultimately leading to cell death. Upon DNA damage, inhibits translation of ATR or ATM based on distinct codon usage without disrupting early DNA damage response signaling. Antiviral restriction factor with manganese-dependent type II tRNA endoribonuclease. A single tRNA molecule is bound and cleaved by the SLFN11 dimer. Specifically abrogates the production of retroviruses such as human immunodeficiency virus 1 (HIV-1) by acting as a specific inhibitor of the synthesis of retroviruses encoded proteins in a codon-usage-dependent manner. Impairs the replication of human cytomegalovirus (HCMV) and some Flaviviruses. Exploits the unique viral codon bias towards A/T nucleotides. Also acts as an interferon (IFN)-induced antiviral protein which acts as an inhibitor of retrovirus protein synthesis. The polypeptide is Schlafen family member 11 (Homo sapiens (Human)).